Reading from the N-terminus, the 905-residue chain is DNA gyrase subunit A (905 aa).

A Topo IIA-type catalytic domain is found at 35-524 (IPDVRDGLKP…GEFDQDIEDL (490 aa)). Tyrosine 123 acts as the O-(5'-phospho-DNA)-tyrosine intermediate in catalysis. A GyrA-box motif is present at residues 551–557 (QKRGGKG).

It belongs to the type II topoisomerase GyrA/ParC subunit family. Heterotetramer, composed of two GyrA and two GyrB chains. In the heterotetramer, GyrA contains the active site tyrosine that forms a transient covalent intermediate with DNA, while GyrB binds cofactors and catalyzes ATP hydrolysis.

It localises to the cytoplasm. The catalysed reaction is ATP-dependent breakage, passage and rejoining of double-stranded DNA.. In terms of biological role, a type II topoisomerase that negatively supercoils closed circular double-stranded (ds) DNA in an ATP-dependent manner to modulate DNA topology and maintain chromosomes in an underwound state. Negative supercoiling favors strand separation, and DNA replication, transcription, recombination and repair, all of which involve strand separation. Also able to catalyze the interconversion of other topological isomers of dsDNA rings, including catenanes and knotted rings. Type II topoisomerases break and join 2 DNA strands simultaneously in an ATP-dependent manner. This Rickettsia prowazekii (strain Madrid E) protein is DNA gyrase subunit A.